Reading from the N-terminus, the 130-residue chain is Small ribosomal subunit protein uS9 (130 aa).

This sequence belongs to the universal ribosomal protein uS9 family.

This is Small ribosomal subunit protein uS9 from Leptothrix cholodnii (strain ATCC 51168 / LMG 8142 / SP-6) (Leptothrix discophora (strain SP-6)).